Here is an 806-residue protein sequence, read N- to C-terminus: MTQAADTDIRVGQPEMVTLTIDGVEISVPKGTLVIRAAELMGIQIPRFCDHPLLEPVGACRQCLVEVEGQRKPLASCTTVATDDMVVRTQLTSEIADKAQHGVMELLLINHPLDCPMCDKGGECPLQNQAMSNGRTDSRFTEAKRTFAKPINISAQVLLDRERCILCARCTRFSDQIAGDPFIDMQERGALQQVGIYADEPFESYFSGNTVQICPVGALTGTAYRFRARPFDLVSSPSVCEHCASGCAQRTDHRRGKVLRRLAGDDPEVNEEWNCDKGRWAFTYATQPDVITTPLIRDGGDPKGALVPTSWSHAMAVAAQGLAAARGRTGVLVGGRVTWEDAYAYAKFARITLGTNDIDFRARPHSAEEADFLAARIAGRHMAVSYADLESAPVVLLVGFEPEDESPIVFLRLRKAARRHRVPVYTIAPFATGGLHKMSGRLIKTVPGGEPAALDDLATGAVGDLLATPGAVIMVGERLATVPGGLSAAARLADTTGARLAWVPRRAGERGALEAGALPTLLPGGRPLADEVARAQVCAAWHIAELPAAAGRDADGILAAAADETLAALLVGGIEPADFADPDAVLAALDATGFVVSLELRHSAVTERADVVFPVAPTTQKAGAFVNWEGRYRTFEPALRGSTLQAGQSDHRVLDALADDMGVHLGVPTVEAAREELAALGIWDGKHAAGPHIAATGPTQPEAGEAILTGWRMLLDEGRLQDGEPYLAGTARTPVVRLSPDTAAEIGAADGEAVTVSTSRGSITLPCSVTDMPDRVVWLPLNSAGSTVHRQLRVTIGSIVKIGAGS.

Residues 15-93 (EMVTLTIDGV…DMVVRTQLTS (79 aa)) enclose the 2Fe-2S ferredoxin-type domain. Cysteine 49, cysteine 60, cysteine 63, and cysteine 77 together coordinate [2Fe-2S] cluster. The 40-residue stretch at 95–134 (IADKAQHGVMELLLINHPLDCPMCDKGGECPLQNQAMSNG) folds into the 4Fe-4S His(Cys)3-ligated-type domain. Residues histidine 111, cysteine 115, cysteine 118, cysteine 124, cysteine 164, cysteine 167, cysteine 170, cysteine 214, cysteine 240, cysteine 243, cysteine 247, and cysteine 275 each coordinate [4Fe-4S] cluster. The region spanning 233–289 (LVSSPSVCEHCASGCAQRTDHRRGKVLRRLAGDDPEVNEEWNCDKGRWAFTYATQPD) is the 4Fe-4S Mo/W bis-MGD-type domain.

It belongs to the complex I 75 kDa subunit family. It depends on [2Fe-2S] cluster as a cofactor. Requires [4Fe-4S] cluster as cofactor.

It carries out the reaction a quinone + NADH + 5 H(+)(in) = a quinol + NAD(+) + 4 H(+)(out). Its function is as follows. NDH-1 shuttles electrons from NADH, via FMN and iron-sulfur (Fe-S) centers, to quinones in the respiratory chain. The immediate electron acceptor for the enzyme in this species is believed to be menaquinone. Couples the redox reaction to proton translocation (for every two electrons transferred, four hydrogen ions are translocated across the cytoplasmic membrane), and thus conserves the redox energy in a proton gradient. This Mycobacterium bovis (strain ATCC BAA-935 / AF2122/97) protein is NADH-quinone oxidoreductase subunit G (nuoG).